The sequence spans 192 residues: uncharacterized protein (192 aa).

The Nudix hydrolase domain maps to 29 to 160 (QRQAAVLIPV…PLDVYRRGNS (132 aa)). A Nudix box motif is present at residues 67–89 (GAVDSTDASLIAAALREAQEEVA). The Mg(2+) site is built by E83 and E87.

Belongs to the Nudix hydrolase family. PCD1 subfamily. Mn(2+) serves as cofactor. It depends on Mg(2+) as a cofactor.

In terms of biological role, probably mediates the hydrolysis of some nucleoside diphosphate derivatives. This is an uncharacterized protein from Salmonella choleraesuis (strain SC-B67).